A 267-amino-acid polypeptide reads, in one-letter code: Cilia- and flagella-associated protein 300 (267 aa).

The protein belongs to the CFAP300 family. As to quaternary structure, interacts with DNAAF2. In terms of tissue distribution, expressed in nasal epithelial cells.

The protein resides in the cytoplasm. It localises to the cytoskeleton. Its subcellular location is the cilium axoneme. Its function is as follows. Cilium- and flagellum-specific protein that plays a role in axonemal structure organization and motility. May play a role in outer and inner dynein arm assembly. This Homo sapiens (Human) protein is Cilia- and flagella-associated protein 300.